Consider the following 382-residue polypeptide: Adaptive-response sensory kinase SasA (382 aa).

The 223-residue stretch at 160–382 (MLAHDLRSPL…CFHFTLPVYR (223 aa)) folds into the Histidine kinase domain. The residue at position 163 (H163) is a Phosphohistidine; by autocatalysis.

In terms of assembly, homooligomerizes. Interacts with KaiC. Participates in the KaiABC clock complex, whose core is composed of a KaiC homohexamer, 6 KaiB and up to 6 KaiA dimers. SasA and KaiB(fs) compete to bind to KaiC.

The enzyme catalyses ATP + protein L-histidine = ADP + protein N-phospho-L-histidine.. In terms of biological role, member of the two-component regulatory system SasA/RpaA involved in genome-wide circadian gene expression. One of several clock output pathways. Participates in the Kai clock protein complex, the main circadian regulator in cyanobacteria, via its interaction with KaiC. KaiC enhances the autophosphorylation activity of SasA, which then transfers its phosphate group to RpaA to activate it. In addition to its output function, recruits fold-shifted KaiB (KaiB(fs)) to KaiC to cooperatively form the KaiB(6):KaiC(6) complex (independent of SasA kinase activity). Required for robustness of the circadian rhythm of gene expression and is involved in clock output, also required for adaptation to light/dark cycles. The chain is Adaptive-response sensory kinase SasA from Crocosphaera subtropica (strain ATCC 51142 / BH68) (Cyanothece sp. (strain ATCC 51142)).